Here is a 497-residue protein sequence, read N- to C-terminus: Putative endothelial lipase (497 aa).

The first 23 residues, 1 to 23 (MRACPFLLLLLLPLLLSLGRIAA), serve as a signal peptide directing secretion. An intrachain disulfide couples C73 to C86. N-linked (GlcNAc...) asparagine glycosylation is found at N89 and N145. The active-site Nucleophile is the S178. D202 serves as the catalytic Charge relay system. C262 and C282 are joined by a disulfide. Residue H284 is the Charge relay system of the active site. Disulfide bonds link C307–C326 and C318–C321. 335-347 (KMRNKRNSKMYLK) is a heparin binding site. Residues 357-492 (FHYQLKIHVF…CLKMVKVEKH (136 aa)) form the PLAT domain. Residue N403 is glycosylated (N-linked (GlcNAc...) asparagine).

This sequence belongs to the AB hydrolase superfamily. Lipase family. As to quaternary structure, head to tail homodimer. Expressed by the venom gland.

The protein localises to the secreted. It catalyses the reaction a triacylglycerol + H2O = a diacylglycerol + a fatty acid + H(+). With respect to regulation, inhibited by serum. Its function is as follows. Has phospholipase and triglyceride lipase activities. The chain is Putative endothelial lipase from Crotalus adamanteus (Eastern diamondback rattlesnake).